A 53-amino-acid polypeptide reads, in one-letter code: Large ribosomal subunit protein bL32c (53 aa).

This sequence belongs to the bacterial ribosomal protein bL32 family.

Its subcellular location is the plastid. The protein localises to the chloroplast. This is Large ribosomal subunit protein bL32c (rpl32) from Guillardia theta (Cryptophyte).